The chain runs to 136 residues: Translation initiation factor 5A (136 aa).

At Lys-36 the chain carries Hypusine.

The protein belongs to the eIF-5A family.

The protein localises to the cytoplasm. Its function is as follows. Functions by promoting the formation of the first peptide bond. The protein is Translation initiation factor 5A (eIF5A) of Hyperthermus butylicus (strain DSM 5456 / JCM 9403 / PLM1-5).